The chain runs to 204 residues: Phosphoribosyl-dephospho-CoA transferase (204 aa).

Catalysis depends on residues Asp129 and Asp131.

Belongs to the MdcG family.

It catalyses the reaction apo-[malonate decarboxylase ACP] + 2'-(5''-triphospho-alpha-D-ribosyl)-3'-dephospho-CoA = holo-[malonate decarboxylase ACP] + diphosphate. In terms of biological role, transfers 2'-(5-triphosphoribosyl)-3'-dephosphocoenzyme-A to the apo-[acyl-carrier-protein] of the malonate decarboxylase to yield holo-[acyl-carrier-protein]. The chain is Phosphoribosyl-dephospho-CoA transferase from Pseudomonas putida (Arthrobacter siderocapsulatus).